We begin with the raw amino-acid sequence, 168 residues long: Phosphopantetheine adenylyltransferase (168 aa).

Residue Thr13 coordinates substrate. ATP-binding positions include 13–14 and His21; that span reads TF. 3 residues coordinate substrate: Lys45, Leu78, and Arg92. ATP is bound by residues 93 to 95, Glu103, and 128 to 134; these read GLR and TQFISSG.

The protein belongs to the bacterial CoaD family. Homohexamer. The cofactor is Mg(2+).

It is found in the cytoplasm. The enzyme catalyses (R)-4'-phosphopantetheine + ATP + H(+) = 3'-dephospho-CoA + diphosphate. It participates in cofactor biosynthesis; coenzyme A biosynthesis; CoA from (R)-pantothenate: step 4/5. Functionally, reversibly transfers an adenylyl group from ATP to 4'-phosphopantetheine, yielding dephospho-CoA (dPCoA) and pyrophosphate. This chain is Phosphopantetheine adenylyltransferase, found in Wolbachia sp. subsp. Drosophila simulans (strain wRi).